Reading from the N-terminus, the 437-residue chain is Epsilon-sarcoglycan (437 aa).

Topologically, residues 1-317 (MQLPRWWELG…LKSRDYYTDF (317 aa)) are extracellular. N-linked (GlcNAc...) asparagine glycosylation occurs at Asn-200. Residues 318–338 (LITLAVPSAVALVLFLILAYI) form a helical membrane-spanning segment. Topologically, residues 339 to 437 (MCCRREGVEK…QQQTTGKWYP (99 aa)) are cytoplasmic.

It belongs to the sarcoglycan alpha/epsilon family. Post-translationally, N-glycosylated. Ubiquitinated, leading to its degradation by the proteasome. Ubiquitous.

Its subcellular location is the cell membrane. It is found in the sarcolemma. The protein resides in the cytoplasm. The protein localises to the cytoskeleton. It localises to the cell projection. Its subcellular location is the dendrite. It is found in the golgi apparatus. Functionally, component of the sarcoglycan complex, a subcomplex of the dystrophin-glycoprotein complex which forms a link between the F-actin cytoskeleton and the extracellular matrix. The polypeptide is Epsilon-sarcoglycan (SGCE) (Homo sapiens (Human)).